The sequence spans 459 residues: Mitochondrial distribution and morphology protein 34 (459 aa).

Positions 1 to 190 (MSFRFNEAVF…LPSLIFNTSQ (190 aa)) constitute an SMP-LTD domain. The span at 338–347 (RSNSNDDNAK) shows a compositional bias: basic and acidic residues. Residues 338 to 375 (RSNSNDDNAKPRRRKIKCKKTRTPSNLQSQGEQAVDDS) form a disordered region. Residues 348 to 359 (PRRRKIKCKKTR) show a composition bias toward basic residues.

Belongs to the MDM34 family. Component of the ER-mitochondria encounter structure (ERMES) or MDM complex, composed of MMM1, MDM10, MDM12 and MDM34. Ubiquitinated by a SCF (SKP1-CUL1-F-box protein) E3 ubiquitin-protein ligase complex containing the F-box protein MDM30. Ubiquitination is important for mitochondrial integrity.

The protein localises to the mitochondrion outer membrane. Its function is as follows. Component of the ERMES/MDM complex, which serves as a molecular tether to connect the endoplasmic reticulum (ER) and mitochondria. Components of this complex are involved in the control of mitochondrial shape and protein biogenesis, and function in nonvesicular lipid trafficking between the ER and mitochondria. MDM34 is required for the interaction of the ER-resident membrane protein MMM1 and the outer mitochondrial membrane-resident beta-barrel protein MDM10. The protein is Mitochondrial distribution and morphology protein 34 of Saccharomyces cerevisiae (strain YJM789) (Baker's yeast).